We begin with the raw amino-acid sequence, 285 residues long: 2-dehydro-3-deoxyphosphooctonate aldolase (285 aa).

It belongs to the KdsA family.

It localises to the cytoplasm. It catalyses the reaction D-arabinose 5-phosphate + phosphoenolpyruvate + H2O = 3-deoxy-alpha-D-manno-2-octulosonate-8-phosphate + phosphate. The protein operates within carbohydrate biosynthesis; 3-deoxy-D-manno-octulosonate biosynthesis; 3-deoxy-D-manno-octulosonate from D-ribulose 5-phosphate: step 2/3. Its pathway is bacterial outer membrane biogenesis; lipopolysaccharide biosynthesis. The chain is 2-dehydro-3-deoxyphosphooctonate aldolase from Polaromonas naphthalenivorans (strain CJ2).